Here is a 446-residue protein sequence, read N- to C-terminus: MEKDKHSHFYNQKSDFRIEHSMLEELENKLINSRKTERAKIQQQLAKIHNNVKKLQHQLKDVKPTPDFVEKLREMMEEIENAINTFKEEQRLIYEELIKEEKTTNNELSAISRKIDTWALGNSETEKAFRAISSKVPVDKVTPSTLPEEVLDFEKFLQQTGGRQGGWDDYDHQNFVKVRNKHKGKPTFMEEVLEHLPGKTQDEVQQHEKWYQKFLALEERKKESIQSWKTKKQQKREEIFKLNEKANNTPMLFHNKPEDNQKQKEEQRKKQKLAVEAWKKQKSIEMSMKYASHLKEEEEKEKKRQKERQRQFKLKLLLESYTQQKKEQEEFLRLEKEKREKAEKAEKRKTAADGISRFQERDLHKLELKILDRQAKEDEKAQKQRRLAKLKEKVENNVSRDPSRLYKPTKGWEERTKKIGPTGSGPLLHIPHRAIPTWRQGIQRRV.

2 coiled-coil regions span residues 23-116 (LEEL…RKID) and 219-400 (ERKK…NVSR). Disordered stretches follow at residues 247-277 (NNTPMLFHNKPEDNQKQKEEQRKKQKLAVEA) and 394-430 (VENNVSRDPSRLYKPTKGWEERTKKIGPTGSGPLLHI). Residues 255-268 (NKPEDNQKQKEEQR) show a composition bias toward basic and acidic residues.

Its subcellular location is the cytoplasm. It localises to the cytoskeleton. The protein localises to the microtubule organizing center. It is found in the centrosome. The protein resides in the centriolar satellite. This chain is Coiled-coil domain-containing protein 112 (CCDC112), found in Macaca fascicularis (Crab-eating macaque).